We begin with the raw amino-acid sequence, 156 residues long: Large ribosomal subunit protein bL9 (156 aa).

Belongs to the bacterial ribosomal protein bL9 family.

In terms of biological role, binds to the 23S rRNA. The sequence is that of Large ribosomal subunit protein bL9 from Treponema pallidum (strain Nichols).